A 415-amino-acid polypeptide reads, in one-letter code: Imidazolonepropionase (415 aa).

H76 and H78 together coordinate Fe(3+). Positions 76 and 78 each coordinate Zn(2+). The 4-imidazolone-5-propanoate site is built by R85, Y148, and H181. Residue Y148 coordinates N-formimidoyl-L-glutamate. Position 246 (H246) interacts with Fe(3+). H246 serves as a coordination point for Zn(2+). Residue E249 coordinates 4-imidazolone-5-propanoate. D320 contributes to the Fe(3+) binding site. D320 lines the Zn(2+) pocket. Positions 322 and 324 each coordinate N-formimidoyl-L-glutamate. T325 is a binding site for 4-imidazolone-5-propanoate.

Belongs to the metallo-dependent hydrolases superfamily. HutI family. Requires Zn(2+) as cofactor. Fe(3+) is required as a cofactor.

It localises to the cytoplasm. It catalyses the reaction 4-imidazolone-5-propanoate + H2O = N-formimidoyl-L-glutamate. It participates in amino-acid degradation; L-histidine degradation into L-glutamate; N-formimidoyl-L-glutamate from L-histidine: step 3/3. Its function is as follows. Catalyzes the hydrolytic cleavage of the carbon-nitrogen bond in imidazolone-5-propanoate to yield N-formimidoyl-L-glutamate. It is the third step in the universal histidine degradation pathway. The polypeptide is Imidazolonepropionase (Thermoanaerobacter pseudethanolicus (strain ATCC 33223 / 39E) (Clostridium thermohydrosulfuricum)).